The following is a 182-amino-acid chain: Keratin, type II cytoskeletal 68 kDa, component IA (182 aa).

Positions 1–66 (DAEQHGEVAL…TLLEGEECRM (66 aa)) constitute an IF rod domain. Residues 1-66 (DAEQHGEVAL…TLLEGEECRM (66 aa)) form a coil 2B region. The interval 67 to 86 (SGECQSSVSIEMVHNTTSSS) is H2 subdomain. The interval 67 to 182 (SGECQSSVSI…SQSQRSHHKL (116 aa)) is tail. Residues 87-162 (SGGSGALGGG…GSCAVSGVGG (76 aa)) are V2 subdomain. The span at 104–124 (GSGGLGSGSLGSGRLGSGGRG) shows a compositional bias: gly residues. The segment at 104–182 (GSGGLGSGSL…SQSQRSHHKL (79 aa)) is disordered. 2 stretches are compositionally biased toward low complexity: residues 144–158 (VRGSVSNSGGSCAVS) and 165–176 (SVRVTQSSSQSQ). The interval 163 to 182 (RGSVRVTQSSSQSQRSHHKL) is E2 subdomain.

This sequence belongs to the intermediate filament family. In terms of assembly, heterotetramer of two type I and two type II keratins.

This chain is Keratin, type II cytoskeletal 68 kDa, component IA, found in Bos taurus (Bovine).